Reading from the N-terminus, the 132-residue chain is Fatty acid-binding protein, intestinal (132 aa).

N-acetylalanine is present on Ala2. Trp83 and Arg107 together coordinate hexadecanoate. 2 residues coordinate tetradecanoate: Trp83 and Arg107.

This sequence belongs to the calycin superfamily. Fatty-acid binding protein (FABP) family.

It localises to the cytoplasm. In terms of biological role, FABPs are thought to play a role in the intracellular transport of long-chain fatty acids and their acyl-CoA esters. FABP2 is probably involved in triglyceride-rich lipoprotein synthesis. Binds saturated long-chain fatty acids with a high affinity, but binds with a lower affinity to unsaturated long-chain fatty acids. FABP2 may also help maintain energy homeostasis by functioning as a lipid sensor. This chain is Fatty acid-binding protein, intestinal (FABP2), found in Sus scrofa (Pig).